Consider the following 640-residue polypeptide: Calpain-5 (640 aa).

A Calpain catalytic domain is found at 26–343 (LFEDPLFPAT…FTDIIKCRLI (318 aa)). Residues cysteine 81, histidine 252, and asparagine 284 contribute to the active site. Residues 344 to 496 (NTSYLSIHKT…VFTDVPSNCR (153 aa)) form a domain III region. The region spanning 499–617 (RLDEPPRTCW…HTLHLQDRSS (119 aa)) is the C2 domain.

Belongs to the peptidase C2 family.

Calcium-regulated non-lysosomal thiol-protease. The sequence is that of Calpain-5 (Capn5) from Mus musculus (Mouse).